We begin with the raw amino-acid sequence, 402 residues long: Exodeoxyribonuclease 7 large subunit (402 aa).

It belongs to the XseA family. Heterooligomer composed of large and small subunits.

It localises to the cytoplasm. The enzyme catalyses Exonucleolytic cleavage in either 5'- to 3'- or 3'- to 5'-direction to yield nucleoside 5'-phosphates.. Bidirectionally degrades single-stranded DNA into large acid-insoluble oligonucleotides, which are then degraded further into small acid-soluble oligonucleotides. The polypeptide is Exodeoxyribonuclease 7 large subunit (Streptomyces coelicolor (strain ATCC BAA-471 / A3(2) / M145)).